A 621-amino-acid chain; its full sequence is (-)-beta-phellandrene synthase 1, chloroplastic (621 aa).

The transit peptide at 1 to 49 (MALALVSVAPLVSMRRSLFSSPYELKSIDKTIPNLVMCRKRMLGRPSIR) directs the protein to the chloroplast. Asp-372, Asp-376, and Asp-524 together coordinate Mg(2+). Residues 372-376 (DDIYD) carry the DDXXD motif motif.

The protein belongs to the terpene synthase family. Tpsd subfamily. Mg(2+) is required as a cofactor. Mn(2+) serves as cofactor.

The protein resides in the plastid. The protein localises to the chloroplast. It catalyses the reaction (2E)-geranyl diphosphate = (-)-beta-phellandrene + diphosphate. It functions in the pathway terpene metabolism; oleoresin biosynthesis. It participates in secondary metabolite biosynthesis; terpenoid biosynthesis. Functionally, monoterpene synthase (TPS) involved in the biosynthesis of monoterpene natural products included in conifer oleoresin secretions and volatile emissions; these compounds contribute to biotic and abiotic stress defense against herbivores and pathogens. Catalyzes the conversion of (2E)-geranyl diphosphate (GPP) to (-)-beta-phellandrene. The sequence is that of (-)-beta-phellandrene synthase 1, chloroplastic from Pinus banksiana (Jack pine).